The primary structure comprises 154 residues: Myoglobin (154 aa).

A Globin domain is found at 2-148 (GLSDGEWQLV…FRKDIAAKYK (147 aa)). Phosphoserine is present on Ser4. Nitrite is bound at residue His65. An O2-binding site is contributed by His65. Thr68 is subject to Phosphothreonine. His94 is a heme b binding site.

Belongs to the globin family. As to quaternary structure, monomeric.

Its subcellular location is the cytoplasm. The protein resides in the sarcoplasm. It carries out the reaction Fe(III)-heme b-[protein] + nitric oxide + H2O = Fe(II)-heme b-[protein] + nitrite + 2 H(+). The catalysed reaction is H2O2 + AH2 = A + 2 H2O. Monomeric heme protein which primary function is to store oxygen and facilitate its diffusion within muscle tissues. Reversibly binds oxygen through a pentacoordinated heme iron and enables its timely and efficient release as needed during periods of heightened demand. Depending on the oxidative conditions of tissues and cells, and in addition to its ability to bind oxygen, it also has a nitrite reductase activity whereby it regulates the production of bioactive nitric oxide. Under stress conditions, like hypoxia and anoxia, it also protects cells against reactive oxygen species thanks to its pseudoperoxidase activity. This is Myoglobin (MB) from Delphinus delphis (Short-beaked common dolphin).